A 263-amino-acid polypeptide reads, in one-letter code: Putative hydro-lyase Psyc_1103 (263 aa).

The protein belongs to the D-glutamate cyclase family.

The chain is Putative hydro-lyase Psyc_1103 from Psychrobacter arcticus (strain DSM 17307 / VKM B-2377 / 273-4).